The chain runs to 308 residues: MNPIVVVHGGGAGPISKDRKERVHQGMVRAATVGYGILREGGSAVDAVEGAVVALEDDPEFNAGCGSVLNTNGEVEMDASIMDGKDLSAGAVSAVQCIANPIKLARLVMEKTPHCFLTDQGAAQFAAAMGVPEIPGEKLVTERNKKRLEKEKHEKGAQKTDCQKNLGTVGAVALDCKGNVAYATSTGGIVNKMVGRVGDSPCLGAGGYADNDIGAVSTTGHGESILKVNLARLTLFHIEQGKTVEEAADLSLGYMKSRVKGLGGLIVVSKTGDWVAKWTSTSMPWAAAKDGKLHFGIDPDDTTITDLP.

M1 bears the N-acetylmethionine mark. The active-site Nucleophile is the T168. Substrate-binding positions include 196-199 (RVGD) and 219-222 (TGHG).

The protein belongs to the Ntn-hydrolase family. As to quaternary structure, heterodimer of an alpha and beta chain produced by autocleavage. This heterodimer may then dimerize in turn, giving rise to a heterotetramer. Cleaved into an alpha and beta chain by autocatalysis; this activates the enzyme. The N-terminal residue of the beta subunit is responsible for the nucleophile hydrolase activity. Expressed in brain, kidney, testis and tissues of the gastrointestinal tract. Present in sperm (at protein level). Over-expressed in uterine, mammary, prostatic and ovarian carcinoma.

The protein localises to the cytoplasm. It catalyses the reaction L-asparagine + H2O = L-aspartate + NH4(+). It carries out the reaction Cleavage of a beta-linked Asp residue from the N-terminus of a polypeptide.. With respect to regulation, glycine accelerates autocleavage into an alpha and beta chain. Its function is as follows. Has both L-asparaginase and beta-aspartyl peptidase activity. May be involved in the production of L-aspartate, which can act as an excitatory neurotransmitter in some brain regions. Is highly active with L-Asp beta-methyl ester. Besides, has catalytic activity toward beta-aspartyl dipeptides and their methyl esters, including beta-L-Asp-L-Phe, beta-L-Asp-L-Phe methyl ester (aspartame), beta-L-Asp-L-Ala, beta-L-Asp-L-Leu and beta-L-Asp-L-Lys. Does not have aspartylglucosaminidase activity and is inactive toward GlcNAc-L-Asn. Likewise, has no activity toward glutamine. In Homo sapiens (Human), this protein is Isoaspartyl peptidase/L-asparaginase (ASRGL1).